A 289-amino-acid chain; its full sequence is tRNA dimethylallyltransferase (289 aa).

Gly-9–Thr-16 serves as a coordination point for ATP. Thr-11–Thr-16 is a substrate binding site. The interaction with substrate tRNA stretch occupies residues Asp-34–Cys-37.

The protein belongs to the IPP transferase family. In terms of assembly, monomer. The cofactor is Mg(2+).

It carries out the reaction adenosine(37) in tRNA + dimethylallyl diphosphate = N(6)-dimethylallyladenosine(37) in tRNA + diphosphate. Catalyzes the transfer of a dimethylallyl group onto the adenine at position 37 in tRNAs that read codons beginning with uridine, leading to the formation of N6-(dimethylallyl)adenosine (i(6)A). The sequence is that of tRNA dimethylallyltransferase from Campylobacter jejuni subsp. doylei (strain ATCC BAA-1458 / RM4099 / 269.97).